The primary structure comprises 1036 residues: Cellulose synthase-like protein D1 (1036 aa).

The segment at 1 to 99 (MASSPPKKTL…GGGDGPKMGN (99 aa)) is disordered. Composition is skewed to polar residues over residues 9–19 (TLNSQSSSLSR) and 69–80 (NQPAGSSGSTSE). Residues 86-95 (NRGGGGGDGP) are compositionally biased toward gly residues. The next 2 helical transmembrane spans lie at 178–198 (ILSP…FFLW) and 208–228 (AMWL…SWIL). Residue Asp308 is part of the active site. The tract at residues 626 to 665 (AMHVRTQSQASQTSQASDLESDTQPLNDDPDLGLPKKFGN) is disordered. The span at 631-642 (TQSQASQTSQAS) shows a compositional bias: low complexity. Asp741 is an active-site residue. Transmembrane regions (helical) follow at residues 817–837 (IYPF…LCLF), 848–868 (IHFL…SLLE), 895–915 (LAAV…SFTL), 938–958 (GLFI…VIGA), 962–982 (IYSV…SLWV), and 1002–1022 (TIVY…WITI).

This sequence belongs to the glycosyltransferase 2 family. Plant cellulose synthase-like D subfamily.

It localises to the golgi apparatus membrane. Functionally, thought to be a Golgi-localized beta-glycan synthase that polymerize the backbones of noncellulosic polysaccharides (hemicelluloses) of plant cell wall. The protein is Cellulose synthase-like protein D1 (CSLD1) of Arabidopsis thaliana (Mouse-ear cress).